The primary structure comprises 422 residues: Glycine amidinotransferase, mitochondrial (422 aa).

The transit peptide at Met-1 to Gln-37 directs the protein to the mitochondrion. Residues Asp-253 and His-302 contribute to the active site. Catalysis depends on Cys-406, which acts as the Amidino-cysteine intermediate.

The protein belongs to the amidinotransferase family. Homodimer.

It localises to the mitochondrion inner membrane. It carries out the reaction L-arginine + glycine = guanidinoacetate + L-ornithine. The protein operates within amine and polyamine biosynthesis; creatine biosynthesis; creatine from L-arginine and glycine: step 1/2. Catalyzes the biosynthesis of guanidinoacetate, the immediate precursor of creatine. Creatine plays a vital role in energy metabolism in muscle tissues. May play a role in embryonic and central nervous system development. The chain is Glycine amidinotransferase, mitochondrial from Xenopus tropicalis (Western clawed frog).